Reading from the N-terminus, the 277-residue chain is F420-dependent methylenetetrahydromethanopterin dehydrogenase (277 aa).

This sequence belongs to the MTD family.

It catalyses the reaction 5,10-methylenetetrahydromethanopterin + oxidized coenzyme F420-(gamma-L-Glu)(n) + 2 H(+) = 5,10-methenyl-5,6,7,8-tetrahydromethanopterin + reduced coenzyme F420-(gamma-L-Glu)(n). It participates in one-carbon metabolism; methanogenesis from CO(2); 5,10-methylene-5,6,7,8-tetrahydromethanopterin from 5,10-methenyl-5,6,7,8-tetrahydromethanopterin (coenzyme F420 route): step 1/1. In terms of biological role, catalyzes the reversible reduction of methenyl-H(4)MPT(+) to methylene-H(4)MPT. This Methanococcus maripaludis (strain C7 / ATCC BAA-1331) protein is F420-dependent methylenetetrahydromethanopterin dehydrogenase.